A 530-amino-acid chain; its full sequence is Glutamyl-tRNA reductase 2, chloroplastic (530 aa).

Residues 1–64 (MAVSSAFVVT…RCEISPSNKA (64 aa)) constitute a chloroplast transit peptide. Substrate contacts are provided by residues 134–137 (TCNR), Ser-194, 199–201 (EGQ), and Gln-205. The active-site Nucleophile is the Cys-135. 277 to 282 (GAGKMG) contacts NADP(+).

The protein belongs to the glutamyl-tRNA reductase family. As to expression, expressed in roots and flowers. Detected in leaves, hypocotyls and cotyledons.

Its subcellular location is the plastid. It is found in the chloroplast. It catalyses the reaction (S)-4-amino-5-oxopentanoate + tRNA(Glu) + NADP(+) = L-glutamyl-tRNA(Glu) + NADPH + H(+). The protein operates within porphyrin-containing compound metabolism; protoporphyrin-IX biosynthesis; 5-aminolevulinate from L-glutamyl-tRNA(Glu): step 1/2. Its pathway is porphyrin-containing compound metabolism; chlorophyll biosynthesis. Functionally, catalyzes the NADPH-dependent reduction of glutamyl-tRNA(Glu) to glutamate 1-semialdehyde (GSA). Probably involved in wound-induced supply of heme to defensive hemoproteins outside plastids. This Arabidopsis thaliana (Mouse-ear cress) protein is Glutamyl-tRNA reductase 2, chloroplastic (HEMA2).